The following is a 102-amino-acid chain: Integration host factor subunit alpha (102 aa).

It belongs to the bacterial histone-like protein family. Heterodimer of an alpha and a beta chain.

Its function is as follows. This protein is one of the two subunits of integration host factor, a specific DNA-binding protein that functions in genetic recombination as well as in transcriptional and translational control. The chain is Integration host factor subunit alpha from Buchnera aphidicola subsp. Acyrthosiphon pisum (strain 5A).